Here is a 272-residue protein sequence, read N- to C-terminus: Shikimate dehydrogenase (NADP(+)) (272 aa).

Shikimate is bound by residues 14–16 (SKS) and T61. The active-site Proton acceptor is K65. NADP(+) is bound at residue E77. Shikimate is bound by residues N86 and D102. NADP(+)-binding positions include 126 to 130 (GAGGA), 149 to 154 (NRTVSR), and M213. Y215 is a shikimate binding site. An NADP(+)-binding site is contributed by G237.

This sequence belongs to the shikimate dehydrogenase family. Homodimer.

The catalysed reaction is shikimate + NADP(+) = 3-dehydroshikimate + NADPH + H(+). It functions in the pathway metabolic intermediate biosynthesis; chorismate biosynthesis; chorismate from D-erythrose 4-phosphate and phosphoenolpyruvate: step 4/7. In terms of biological role, involved in the biosynthesis of the chorismate, which leads to the biosynthesis of aromatic amino acids. Catalyzes the reversible NADPH linked reduction of 3-dehydroshikimate (DHSA) to yield shikimate (SA). This chain is Shikimate dehydrogenase (NADP(+)), found in Escherichia coli O45:K1 (strain S88 / ExPEC).